Here is a 146-residue protein sequence, read N- to C-terminus: VHLTPEEKSAVTALWGKVNVDEVGGEALGRLLVVYPWTQRFFESFGDLSTPDAVMGNPKVKAHGKKVLGAFSDGLAHLDNLKGTFAQLSELHCDKLHVDPENFRLLGNVLVCVLAHHFGKEFTPQVQAAYQKVVAGVANALAHKYH.

Position 1 is an N-acetylvaline (valine 1). A Globin domain is found at 2-146 (HLTPEEKSAV…VANALAHKYH (145 aa)). Position 12 is a phosphothreonine (threonine 12). Residue serine 44 is modified to Phosphoserine. At lysine 59 the chain carries N6-acetyllysine. A heme b-binding site is contributed by histidine 63. At lysine 82 the chain carries N6-acetyllysine. Histidine 92 is a heme b binding site. Cysteine 93 is modified (S-nitrosocysteine). Position 144 is an N6-acetyllysine (lysine 144).

It belongs to the globin family. Heterotetramer of two alpha chains and two beta chains. In terms of tissue distribution, red blood cells.

Involved in oxygen transport from the lung to the various peripheral tissues. This chain is Hemoglobin subunit beta (HBB), found in Hylobates lar (Lar gibbon).